We begin with the raw amino-acid sequence, 73 residues long: Long neurotoxin 3 (73 aa).

5 disulfides stabilise this stretch: C3–C21, C14–C42, C27–C31, C46–C57, and C58–C63.

It belongs to the three-finger toxin family. Long-chain subfamily. Type II alpha-neurotoxin sub-subfamily. Expressed by the venom gland.

It is found in the secreted. Binds with high affinity to muscular (alpha-1/CHRNA1) and neuronal (alpha-7/CHRNA7) nicotinic acetylcholine receptor (nAChR) and inhibits acetylcholine from binding to the receptor, thereby impairing neuromuscular and neuronal transmission. The polypeptide is Long neurotoxin 3 (Ophiophagus hannah (King cobra)).